The following is a 241-amino-acid chain: Triosephosphate isomerase (241 aa).

9 to 11 (NWK) is a substrate binding site. H96 acts as the Electrophile in catalysis. E165 functions as the Proton acceptor in the catalytic mechanism. Substrate contacts are provided by residues G171, S204, and 225-226 (GG).

Belongs to the triosephosphate isomerase family. As to quaternary structure, homodimer.

It is found in the cytoplasm. It carries out the reaction D-glyceraldehyde 3-phosphate = dihydroxyacetone phosphate. Its pathway is carbohydrate biosynthesis; gluconeogenesis. It participates in carbohydrate degradation; glycolysis; D-glyceraldehyde 3-phosphate from glycerone phosphate: step 1/1. Involved in the gluconeogenesis. Catalyzes stereospecifically the conversion of dihydroxyacetone phosphate (DHAP) to D-glyceraldehyde-3-phosphate (G3P). The protein is Triosephosphate isomerase of Prochlorococcus marinus subsp. pastoris (strain CCMP1986 / NIES-2087 / MED4).